The primary structure comprises 37 residues: Large ribosomal subunit protein bL36c (37 aa).

It belongs to the bacterial ribosomal protein bL36 family.

The protein resides in the plastid. The protein localises to the chloroplast. The sequence is that of Large ribosomal subunit protein bL36c from Huperzia lucidula (Shining clubmoss).